Reading from the N-terminus, the 472-residue chain is Maintenance of mitochondrial morphology protein 1 (472 aa).

Residues 1–22 (MAFQQGEAAPVSTQSSLSFTQG) lie on the Lumenal side of the membrane. The chain crosses the membrane as a helical span at residues 23 to 43 (FLLGQLSVVLLIGAFIKFFIF). Residues 44 to 472 (GEAPPPPSRG…GSMPEAPGAQ (429 aa)) are Cytoplasmic-facing. Disordered stretches follow at residues 51 to 92 (SRGL…VPSS), 270 to 303 (LHTP…PKSS), and 370 to 472 (RMGR…PGAQ). The span at 81 to 92 (STSNVLRPVPSS) shows a compositional bias: polar residues. Residues 124–365 (QPESLDWFNV…EPRVQVVGLP (242 aa)) enclose the SMP-LTD domain. The span at 270–280 (LHTPSPMPSPP) shows a compositional bias: pro residues. Residues 281-297 (TAGAQPAAGAQPTDGGD) show a composition bias toward low complexity. The segment covering 450 to 460 (TRERSLGDDFH) has biased composition (basic and acidic residues).

This sequence belongs to the MMM1 family. As to quaternary structure, homodimer. Component of the ER-mitochondria encounter structure (ERMES) or MDM complex, composed of mmm1, mdm10, mdm12 and mdm34. A mmm1 homodimer associates with one molecule of mdm12 on each side in a pairwise head-to-tail manner, and the SMP-LTD domains of mmm1 and mdm12 generate a continuous hydrophobic tunnel for phospholipid trafficking.

It is found in the endoplasmic reticulum membrane. Component of the ERMES/MDM complex, which serves as a molecular tether to connect the endoplasmic reticulum (ER) and mitochondria. Components of this complex are involved in the control of mitochondrial shape and protein biogenesis, and function in nonvesicular lipid trafficking between the ER and mitochondria. The mdm12-mmm1 subcomplex functions in the major beta-barrel assembly pathway that is responsible for biogenesis of all outer membrane beta-barrel proteins, and acts in a late step after the SAM complex. The mdm10-mdm12-mmm1 subcomplex further acts in the TOM40-specific pathway after the action of the mdm12-mmm1 complex. Essential for establishing and maintaining the structure of mitochondria and maintenance of mtDNA nucleoids. This chain is Maintenance of mitochondrial morphology protein 1, found in Emericella nidulans (strain FGSC A4 / ATCC 38163 / CBS 112.46 / NRRL 194 / M139) (Aspergillus nidulans).